Reading from the N-terminus, the 107-residue chain is MEQFECINIQQAQQKLADDNALLVDIRDAQSFAAAHASGAFHLSNESLPPFLAQSDLARPVLVMCYHGNSSKGAAQYLLGQGFSAAYSIDGGFEAWRIAFPQQVSAQ.

The region spanning 17 to 105 is the Rhodanese domain; that stretch reads ADDNALLVDI…WRIAFPQQVS (89 aa). The Cysteine persulfide intermediate role is filled by Cys-65.

The protein belongs to the GlpE family.

The protein resides in the cytoplasm. The enzyme catalyses thiosulfate + hydrogen cyanide = thiocyanate + sulfite + 2 H(+). It carries out the reaction thiosulfate + [thioredoxin]-dithiol = [thioredoxin]-disulfide + hydrogen sulfide + sulfite + 2 H(+). In terms of biological role, transferase that catalyzes the transfer of sulfur from thiosulfate to thiophilic acceptors such as cyanide or dithiols. May function in a CysM-independent thiosulfate assimilation pathway by catalyzing the conversion of thiosulfate to sulfite, which can then be used for L-cysteine biosynthesis. This is Thiosulfate sulfurtransferase GlpE from Erwinia tasmaniensis (strain DSM 17950 / CFBP 7177 / CIP 109463 / NCPPB 4357 / Et1/99).